Here is a 329-residue protein sequence, read N- to C-terminus: Quinone-oxidoreductase homolog, chloroplastic (329 aa).

This sequence belongs to the zinc-containing alcohol dehydrogenase family. Quinone oxidoreductase subfamily. In terms of processing, the transit peptide is not cleaved.

The protein resides in the plastid. The protein localises to the chloroplast inner membrane. The chain is Quinone-oxidoreductase homolog, chloroplastic (QOR) from Spinacia oleracea (Spinach).